The sequence spans 131 residues: Large ribosomal subunit protein mL60 (131 aa).

Residues 1–12 constitute a mitochondrion transit peptide; that stretch reads MFGPFKLTSPVA.

Belongs to the mitochondrion-specific ribosomal protein mL60 family. As to quaternary structure, component of the mitochondrial large ribosomal subunit (mt-LSU). Mature yeast 74S mitochondrial ribosomes consist of a small (37S) and a large (54S) subunit. The 37S small subunit contains a 15S ribosomal RNA (15S mt-rRNA) and 34 different proteins. The 54S large subunit contains a 21S rRNA (21S mt-rRNA) and 46 different proteins.

The protein resides in the mitochondrion. Functionally, component of the mitochondrial ribosome (mitoribosome), a dedicated translation machinery responsible for the synthesis of mitochondrial genome-encoded proteins, including at least some of the essential transmembrane subunits of the mitochondrial respiratory chain. The mitoribosomes are attached to the mitochondrial inner membrane and translation products are cotranslationally integrated into the membrane. This Saccharomyces cerevisiae (strain ATCC 204508 / S288c) (Baker's yeast) protein is Large ribosomal subunit protein mL60 (MRPL31).